Reading from the N-terminus, the 213-residue chain is Imidazole glycerol phosphate synthase subunit HisH 1 (213 aa).

Residues 4-213 (TVAVIDYGMG…QNFVAWDGRW (210 aa)) form the Glutamine amidotransferase type-1 domain. The active-site Nucleophile is the Cys82. Residues His191 and Glu193 contribute to the active site.

Heterodimer of HisH and HisF.

The protein localises to the cytoplasm. The catalysed reaction is 5-[(5-phospho-1-deoxy-D-ribulos-1-ylimino)methylamino]-1-(5-phospho-beta-D-ribosyl)imidazole-4-carboxamide + L-glutamine = D-erythro-1-(imidazol-4-yl)glycerol 3-phosphate + 5-amino-1-(5-phospho-beta-D-ribosyl)imidazole-4-carboxamide + L-glutamate + H(+). The enzyme catalyses L-glutamine + H2O = L-glutamate + NH4(+). It functions in the pathway amino-acid biosynthesis; L-histidine biosynthesis; L-histidine from 5-phospho-alpha-D-ribose 1-diphosphate: step 5/9. Its function is as follows. IGPS catalyzes the conversion of PRFAR and glutamine to IGP, AICAR and glutamate. The HisH subunit provides the glutamine amidotransferase activity that produces the ammonia necessary to HisF for the synthesis of IGP and AICAR. This chain is Imidazole glycerol phosphate synthase subunit HisH 1 (hisH1), found in Pseudomonas aeruginosa (strain ATCC 15692 / DSM 22644 / CIP 104116 / JCM 14847 / LMG 12228 / 1C / PRS 101 / PAO1).